The following is a 1527-amino-acid chain: Lysophospholipase nte1 (1527 aa).

At 1 to 69 the chain is on the cytoplasmic side; the sequence is MADDGGPFPL…PPPAPSTMVG (69 aa). The helical transmembrane segment at 70–90 threads the bilayer; it reads WIGWVFSFVFQVIPSILYWAI. Residues 91 to 112 are Lumenal-facing; that stretch reads TFCTITLPTWLFTLFSMSLTFT. Residues 113-133 form a helical membrane-spanning segment; sequence MNFTTLLLIALAIVSTVSWFI. Residues 134-1527 are Cytoplasmic-facing; sequence RYRFLNMYSR…RTLAPRRASI (1394 aa). 4 disordered regions span residues 240–259, 299–387, 576–596, and 750–785; these read ADHELNLAGDDSTDEEGQNV, LSSS…HPDI, EKEQSPFRPPTMRGPASPFHR, and AHGEEAFPTLKRTTTASSRTSSVAPGGSDSKRRRQS. Over residues 355–373 the composition is skewed to basic and acidic residues; that stretch reads HLEESRGTPDHDHQPESRT. Residues 685–804 and 846–966 contribute to the a nucleoside 3',5'-cyclic phosphate site; these read GGTS…VGSV and RLTS…IAQR. Over residues 761–771 the composition is skewed to low complexity; the sequence is RTTTASSRTSS. Positions 1224–1388 constitute a PNPLA domain; sequence LVLGGGGARG…IDNLTVPHMK (165 aa). The GXGXXG motif lies at 1228–1233; that stretch reads GGGARG. The short motif at 1255-1259 is the GXSXG element; it reads GTSIG. The active-site Nucleophile is the S1257. The active-site Proton acceptor is the D1375. The DGA/G motif lies at 1375–1377; the sequence is DGG.

The protein belongs to the NTE family.

Its subcellular location is the endoplasmic reticulum membrane. The catalysed reaction is a 1-acyl-sn-glycero-3-phosphocholine + H2O = sn-glycerol 3-phosphocholine + a fatty acid + H(+). With respect to regulation, inhibited by organophosphorus esters. In terms of biological role, intracellular phospholipase B that catalyzes the double deacylation of phosphatidylcholine (PC) to glycerophosphocholine (GroPCho). Plays an important role in membrane lipid homeostasis. Responsible for the rapid PC turnover in response to inositol, elevated temperatures, or when choline is present in the growth medium. This Aspergillus terreus (strain NIH 2624 / FGSC A1156) protein is Lysophospholipase nte1 (nte1).